A 418-amino-acid chain; its full sequence is Putative ion-transport protein YfeO (418 aa).

The next 12 membrane-spanning stretches (helical) occupy residues 10–30 (LLLS…LIVV), 54–74 (DSPL…GLVI), 99–119 (ALPG…SLGP), 120–140 (EHPI…RLLP), 149–169 (ILAS…AALI), 186–206 (LFAP…FFHP), 223–243 (ILSG…AVWC), 258–278 (VLVL…GGPV), 300–320 (DYFL…ASGF), 322–342 (GGRI…LHEH), 343–363 (VPAV…VLVV), and 371–391 (LFMA…CIVM).

The protein belongs to the chloride channel (TC 2.A.49) family.

The protein resides in the cell membrane. This chain is Putative ion-transport protein YfeO, found in Shigella boydii serotype 18 (strain CDC 3083-94 / BS512).